The chain runs to 400 residues: tRNA-specific 2-thiouridylase MnmA (400 aa).

ATP is bound by residues 19–26 (AMSGGVDS) and leucine 45. The Nucleophile role is filled by cysteine 113. A disulfide bridge connects residues cysteine 113 and cysteine 210. Glycine 137 is a binding site for ATP. The tract at residues 160-162 (RDQ) is interaction with tRNA. The active-site Cysteine persulfide intermediate is the cysteine 210.

Belongs to the MnmA/TRMU family.

The protein localises to the cytoplasm. The catalysed reaction is S-sulfanyl-L-cysteinyl-[protein] + uridine(34) in tRNA + AH2 + ATP = 2-thiouridine(34) in tRNA + L-cysteinyl-[protein] + A + AMP + diphosphate + H(+). Its function is as follows. Catalyzes the 2-thiolation of uridine at the wobble position (U34) of tRNA, leading to the formation of s(2)U34. In Rhodopseudomonas palustris (strain BisA53), this protein is tRNA-specific 2-thiouridylase MnmA.